Here is a 362-residue protein sequence, read N- to C-terminus: Mannose-1-phosphate guanyltransferase (362 aa).

It belongs to the transferase hexapeptide repeat family.

It localises to the cytoplasm. It catalyses the reaction alpha-D-mannose 1-phosphate + GTP + H(+) = GDP-alpha-D-mannose + diphosphate. It participates in nucleotide-sugar biosynthesis; GDP-alpha-D-mannose biosynthesis; GDP-alpha-D-mannose from alpha-D-mannose 1-phosphate (GTP route): step 1/1. In terms of biological role, involved in cell wall synthesis where it is required for glycosylation. Involved in cell cycle progression through cell-size checkpoint. This Candida albicans (strain SC5314 / ATCC MYA-2876) (Yeast) protein is Mannose-1-phosphate guanyltransferase (MPG1).